A 143-amino-acid chain; its full sequence is Anti-sigma F factor (143 aa).

The protein belongs to the anti-sigma-factor family.

The enzyme catalyses L-seryl-[protein] + ATP = O-phospho-L-seryl-[protein] + ADP + H(+). It carries out the reaction L-threonyl-[protein] + ATP = O-phospho-L-threonyl-[protein] + ADP + H(+). Its function is as follows. Binds to sigma F and blocks its ability to form an RNA polymerase holoenzyme (E-sigma F). Phosphorylates SpoIIAA on a serine residue. This phosphorylation may enable SpoIIAA to act as an anti-anti-sigma factor that counteracts SpoIIAB and thus releases sigma F from inhibition. The polypeptide is Anti-sigma F factor (Clostridium novyi (strain NT)).